The sequence spans 93 residues: uncharacterized protein (93 aa).

This is an uncharacterized protein from Acidianus sp. F28 (AFV-2).